An 83-amino-acid chain; its full sequence is uncharacterized protein (83 aa).

Residues 24 to 44 (AMTLLIITNTLLIILSYSVLL) form a helical membrane-spanning segment.

It is found in the host membrane. This is an uncharacterized protein from Acidianus sp. F28 (AFV-2).